A 295-amino-acid chain; its full sequence is Cyclin-G1 (295 aa).

Belongs to the cyclin family. Cyclin G subfamily.

It localises to the nucleus. Its function is as follows. May play a role in growth regulation. Is associated with G2/M phase arrest in response to DNA damage. May be an intermediate by which p53 mediates its role as an inhibitor of cellular proliferation. This Sus scrofa (Pig) protein is Cyclin-G1 (CCNG1).